The primary structure comprises 576 residues: Lysine--tRNA ligase (576 aa).

Residues Glu-412 and Glu-419 each coordinate Mg(2+).

The protein belongs to the class-II aminoacyl-tRNA synthetase family. In terms of assembly, homodimer. Mg(2+) is required as a cofactor.

It is found in the cytoplasm. The catalysed reaction is tRNA(Lys) + L-lysine + ATP = L-lysyl-tRNA(Lys) + AMP + diphosphate. This Phocaeicola vulgatus (strain ATCC 8482 / DSM 1447 / JCM 5826 / CCUG 4940 / NBRC 14291 / NCTC 11154) (Bacteroides vulgatus) protein is Lysine--tRNA ligase.